The sequence spans 177 residues: ATP synthase subunit delta (177 aa).

The protein belongs to the ATPase delta chain family. As to quaternary structure, F-type ATPases have 2 components, F(1) - the catalytic core - and F(0) - the membrane proton channel. F(1) has five subunits: alpha(3), beta(3), gamma(1), delta(1), epsilon(1). F(0) has three main subunits: a(1), b(2) and c(10-14). The alpha and beta chains form an alternating ring which encloses part of the gamma chain. F(1) is attached to F(0) by a central stalk formed by the gamma and epsilon chains, while a peripheral stalk is formed by the delta and b chains.

It is found in the cell inner membrane. Functionally, f(1)F(0) ATP synthase produces ATP from ADP in the presence of a proton or sodium gradient. F-type ATPases consist of two structural domains, F(1) containing the extramembraneous catalytic core and F(0) containing the membrane proton channel, linked together by a central stalk and a peripheral stalk. During catalysis, ATP synthesis in the catalytic domain of F(1) is coupled via a rotary mechanism of the central stalk subunits to proton translocation. This protein is part of the stalk that links CF(0) to CF(1). It either transmits conformational changes from CF(0) to CF(1) or is implicated in proton conduction. The sequence is that of ATP synthase subunit delta from Neisseria gonorrhoeae (strain ATCC 700825 / FA 1090).